The following is a 1199-amino-acid chain: Metabotropic glutamate receptor 1 (1199 aa).

The first 20 residues, 1–20 (MVRLLLIFFPMIFLEMSILP), serve as a signal peptide directing secretion. The Extracellular portion of the chain corresponds to 21–592 (RMPDRKVLLA…IRYLEWSDIE (572 aa)). Cys-67 and Cys-109 form a disulfide bridge. Tyr-74 lines the L-glutamate pocket. Asn-98 is a glycosylation site (N-linked (GlcNAc...) asparagine). L-glutamate is bound by residues Ser-165 and 186–188 (SAT). N-linked (GlcNAc...) asparagine glycosylation is present at Asn-223. Tyr-236 is a binding site for L-glutamate. The cysteines at positions 289 and 291 are disulfide-linked. Asp-318 contacts L-glutamate. A disulfide bond links Cys-378 and Cys-394. N-linked (GlcNAc...) asparagine glycosylation is present at Asn-397. Lys-409 serves as a coordination point for L-glutamate. A disulfide bridge connects residues Cys-432 and Cys-439. Asn-515 is a glycosylation site (N-linked (GlcNAc...) asparagine). Residues 593 to 615 (SIIAIAFSCLGILVTLFVTLIFV) traverse the membrane as a helical segment. Over 616–629 (LYRDTPVVKSSSRE) the chain is Cytoplasmic. A helical membrane pass occupies residues 630–650 (LCYIILAGIFLGYVCPFTLIA). Residues 651–658 (KPTTTSCY) lie on the Extracellular side of the membrane. Cys-657 and Cys-746 form a disulfide bridge. Residues 659 to 680 (LQRLLVGLSSAMCYSALVTKTN) traverse the membrane as a helical segment. Over 681–703 (RIARILAGSKKKICTRKPRFMSA) the chain is Cytoplasmic. The chain crosses the membrane as a helical span at residues 704-727 (WAQVIIASILISVQLTLVVTLIIM). Topologically, residues 728–750 (EPPMPILSYPSIKEVYLICNTSN) are extracellular. Asn-747 carries N-linked (GlcNAc...) asparagine glycosylation. The helical transmembrane segment at 751–772 (LGVVAPVGYNGLLIMSCTYYAF) threads the bilayer. Residues 773 to 785 (KTRNVPANFNEAK) lie on the Cytoplasmic side of the membrane. The chain crosses the membrane as a helical span at residues 786-807 (YIAFTMYTTCIIWLAFVPIYFG). At 808–815 (SNYKIITT) the chain is on the extracellular side. A helical membrane pass occupies residues 816 to 840 (CFAVSLSVTVALGCMFTPKMYIIIA). Over 841-1199 (KPERNVRSAF…RDYKQSSSTL (359 aa)) the chain is Cytoplasmic. A Phosphoserine modification is found at Ser-853. Residue Thr-871 is modified to Phosphothreonine. 3 disordered regions span residues 882–906 (GAGN…APKG), 959–1035 (EEDN…QPKS), and 1055–1082 (HAVL…QHLQ). Residues 885–895 (NANSNGKSVSW) are compositionally biased toward polar residues. Residues Ser-894 and Ser-969 each carry the phosphoserine modification. Positions 1012-1032 (GLPPPLPQQQQQPPPQPPPQQ) are enriched in pro residues. Position 1097 is a phosphoserine (Ser-1097). A disordered region spans residues 1118 to 1177 (VYEREGNTEEDDLEEEEDLPAASKLTPEDSPALTPPSPFRDSVASGSSVPSSPVSESVLC). The span at 1125–1136 (TEEDDLEEEEDL) shows a compositional bias: acidic residues. Ser-1147 carries the post-translational modification Phosphoserine. Residue Thr-1151 is modified to Phosphothreonine. Ser-1154 carries the phosphoserine modification. The segment covering 1159–1175 (SVASGSSVPSSPVSESV) has biased composition (low complexity).

Belongs to the G-protein coupled receptor 3 family. In terms of assembly, homodimer; disulfide-linked. The PPXXF motif binds HOMER1, HOMER2 and HOMER3. Interacts with TAMALIN. Interacts with RYR1, RYR2, ITPR1, SHANK1 and SHANK3. Interacts with SHIA1. In terms of tissue distribution, expressed in the striatum (at protein level). Expressed in type II unipolar brush cells of the cerebellum (at protein level).

Its subcellular location is the cell membrane. It is found in the postsynaptic cell membrane. It localises to the cell projection. The protein localises to the dendrite. In terms of biological role, G-protein coupled receptor for glutamate. Ligand binding causes a conformation change that triggers signaling via guanine nucleotide-binding proteins (G proteins) and modulates the activity of down-stream effectors. Signaling activates a phosphatidylinositol-calcium second messenger system. May participate in the central action of glutamate in the CNS, such as long-term potentiation in the hippocampus and long-term depression in the cerebellum (By. similarity). May function in the light response in the retina. Induces GRID1 and GRID2 cation-channel activation via GNAQ-PLC-PKC pathway in dopaminergic neurons and cerebellar Purkinje cell, respectively. This is Metabotropic glutamate receptor 1 (Grm1) from Mus musculus (Mouse).